Reading from the N-terminus, the 443-residue chain is UDP-N-acetylmuramate--L-alanine ligase (443 aa).

110–116 (GAHGKTS) lines the ATP pocket.

It belongs to the MurCDEF family.

It localises to the cytoplasm. The catalysed reaction is UDP-N-acetyl-alpha-D-muramate + L-alanine + ATP = UDP-N-acetyl-alpha-D-muramoyl-L-alanine + ADP + phosphate + H(+). It participates in cell wall biogenesis; peptidoglycan biosynthesis. Its function is as follows. Cell wall formation. This is UDP-N-acetylmuramate--L-alanine ligase from Lactococcus lactis subsp. cremoris (strain SK11).